Here is a 351-residue protein sequence, read N- to C-terminus: Transaldolase (351 aa).

K138 acts as the Schiff-base intermediate with substrate in catalysis.

Belongs to the transaldolase family. Type 2 subfamily.

It is found in the cytoplasm. It carries out the reaction D-sedoheptulose 7-phosphate + D-glyceraldehyde 3-phosphate = D-erythrose 4-phosphate + beta-D-fructose 6-phosphate. The protein operates within carbohydrate degradation; pentose phosphate pathway; D-glyceraldehyde 3-phosphate and beta-D-fructose 6-phosphate from D-ribose 5-phosphate and D-xylulose 5-phosphate (non-oxidative stage): step 2/3. Transaldolase is important for the balance of metabolites in the pentose-phosphate pathway. This is Transaldolase from Neisseria meningitidis serogroup C / serotype 2a (strain ATCC 700532 / DSM 15464 / FAM18).